A 568-amino-acid chain; its full sequence is Alpha-1,3-galactosidase A (568 aa).

The N-terminal stretch at 1–17 (MMSVWFIQLAIFAQSRI) is a signal peptide. PbH1 repeat units lie at residues 87 to 125 (LYLN…VLKN), 243 to 265 (SKGI…VCQY), 299 to 321 (RGMI…NIHG), 409 to 431 (TPEV…LITT), 432 to 454 (RRKS…FVAD), and 465 to 486 (VHDL…ISID).

It belongs to the glycosyl hydrolase 110 family. A subfamily.

The enzyme catalyses Hydrolysis of terminal, non-reducing branched (1-&gt;3)-alpha-D-galactosidic residues, producing free D-galactose.. It catalyses the reaction Hydrolysis of terminal, non-reducing alpha-D-galactose residues in alpha-D-galactosides, including galactose oligosaccharides, galactomannans and galactolipids.. Its function is as follows. Alpha-galactosidase that specifically removes branched alpha-1,3-linked galactose residues present in blood group B antigens. Has no activity toward linear alpha-1,3-linked galactose residues. In Bacteroides thetaiotaomicron (strain ATCC 29148 / DSM 2079 / JCM 5827 / CCUG 10774 / NCTC 10582 / VPI-5482 / E50), this protein is Alpha-1,3-galactosidase A (glaA).